The sequence spans 211 residues: Cytidylate kinase (211 aa).

9–17 (GPAAAGKGT) contributes to the ATP binding site.

Belongs to the cytidylate kinase family. Type 1 subfamily.

The protein resides in the cytoplasm. The enzyme catalyses CMP + ATP = CDP + ADP. The catalysed reaction is dCMP + ATP = dCDP + ADP. The polypeptide is Cytidylate kinase (Paramagnetospirillum magneticum (strain ATCC 700264 / AMB-1) (Magnetospirillum magneticum)).